Here is a 204-residue protein sequence, read N- to C-terminus: Protein DESIGUAL 4 (204 aa).

The next 4 membrane-spanning stretches (helical) occupy residues 13-33, 60-80, 107-127, and 143-163; these read IITV…VAGF, FVLG…ANVI, CLFL…NGIW, and VFSI…IYYI. Residues 177-204 are disordered; sequence KPNKTKPSELKPIPTEPNEAEPNSTPNP. N179 carries N-linked (GlcNAc...) asparagine glycosylation.

This sequence belongs to the DESIGUAL family. In terms of tissue distribution, only expressed in inflorescences.

The protein localises to the endoplasmic reticulum membrane. The sequence is that of Protein DESIGUAL 4 from Arabidopsis thaliana (Mouse-ear cress).